Here is a 465-residue protein sequence, read N- to C-terminus: Ribosome biogenesis protein YTM1 (465 aa).

Residues Ala18–Arg99 are ubiquitin-like (UBL) domain. WD repeat units follow at residues Leu111–Ser153, Gly160–Thr198, Gly205–Val242, Gly277–Thr317, Thr319–Ser358, Gly364–Asp404, and Gly427–Ala465. The tract at residues Lys235–Leu272 is disordered.

Belongs to the WD repeat WDR12/YTM1 family. As to quaternary structure, component of the NOP7 complex, composed of ERB1, NOP7 and YTM1. The complex is held together by ERB1, which interacts with NOP7 via its N-terminal domain and with YTM1 via a high-affinity interaction between the seven-bladed beta-propeller domains of the 2 proteins. The NOP7 complex associates with the 66S pre-ribosome. Interacts (via UBL domain) with MDN1 (via VWFA/MIDAS domain).

The protein localises to the nucleus. It is found in the nucleolus. The protein resides in the nucleoplasm. Functionally, component of the NOP7 complex, which is required for maturation of the 25S and 5.8S ribosomal RNAs and formation of the 60S ribosome. The sequence is that of Ribosome biogenesis protein YTM1 from Coccidioides immitis (strain RS) (Valley fever fungus).